A 367-amino-acid chain; its full sequence is Glutamate 5-kinase (367 aa).

Residue lysine 10 participates in ATP binding. Substrate contacts are provided by serine 50, aspartate 137, and asparagine 149. Residues 169-170 (TD) and 211-217 (TGGMSTK) each bind ATP. Residues 275 to 353 (AGEITVDEGA…QQIDAILGYE (79 aa)) enclose the PUA domain.

It belongs to the glutamate 5-kinase family.

It is found in the cytoplasm. It catalyses the reaction L-glutamate + ATP = L-glutamyl 5-phosphate + ADP. It functions in the pathway amino-acid biosynthesis; L-proline biosynthesis; L-glutamate 5-semialdehyde from L-glutamate: step 1/2. Its function is as follows. Catalyzes the transfer of a phosphate group to glutamate to form L-glutamate 5-phosphate. The sequence is that of Glutamate 5-kinase from Salmonella agona (strain SL483).